The following is a 514-amino-acid chain: 1-pyrroline-5-carboxylate dehydrogenase (514 aa).

Residues Glu286 and Cys320 contribute to the active site.

This sequence belongs to the aldehyde dehydrogenase family. RocA subfamily.

The enzyme catalyses L-glutamate 5-semialdehyde + NAD(+) + H2O = L-glutamate + NADH + 2 H(+). It participates in amino-acid degradation; L-proline degradation into L-glutamate; L-glutamate from L-proline: step 2/2. The protein is 1-pyrroline-5-carboxylate dehydrogenase of Staphylococcus haemolyticus (strain JCSC1435).